The following is a 359-amino-acid chain: sn-1 acyl-lipid omega-3 desaturase (ferredoxin) (359 aa).

The segment covering 1 to 15 has biased composition (polar residues); it reads MQLDTISFNNPLNSE. The interval 1 to 20 is disordered; the sequence is MQLDTISFNNPLNSETSEDT. 2 helical membrane-spanning segments follow: residues 47–67 and 70–90; these read LFYFFRDILIIGLLYAVASYL and WLFFPIFWLMQGTMFWALFVV. Positions 92–96 match the Histidine box-1 motif; the sequence is HDCGH. The Histidine box-2 signature appears at 128 to 132; it reads HRTHH. A run of 2 helical transmembrane segments spans residues 207-227 and 228-248; these read VLLIGMVGLLGFLTYQWGWMW and LLKYYAVPYLVFIVWLDLVTF. The short motif at 294–298 is the Histidine box-3 element; sequence HHIFL.

This sequence belongs to the fatty acid desaturase type 2 family. Requires Fe(2+) as cofactor.

The protein localises to the membrane. The enzyme catalyses a 1-[(9Z,12Z)-octadecdienoyl]-2-acyl-glycerolipid + 2 reduced [2Fe-2S]-[ferredoxin] + O2 + 2 H(+) = a 1-[(9Z,12Z,15Z)-octadectrienoyl]-2-acyl-glycerolipid + 2 oxidized [2Fe-2S]-[ferredoxin] + 2 H2O. It carries out the reaction a 1-[(6Z,9Z,12Z)-octadectrienoyl]-2-acyl-glycerolipid + 2 reduced [2Fe-2S]-[ferredoxin] + O2 + 2 H(+) = a 1-[(6Z,9Z,12Z,15Z)-octadectetraenoyl]-2-acyl-glycerolipid + 2 oxidized [2Fe-2S]-[ferredoxin] + 2 H2O. Its pathway is lipid metabolism; polyunsaturated fatty acid biosynthesis. Functionally, desaturase involved in fatty acid biosynthesis. Introduces a double bond at carbon 15 of linoleoyl and gamma-linolenoyl groups attached to the sn-1 position of the glycerol moiety of membrane glycerolipids. The sequence is that of sn-1 acyl-lipid omega-3 desaturase (ferredoxin) from Nostoc sp. (strain 36).